The following is a 155-amino-acid chain: Leader peptidase HopD (155 aa).

Belongs to the peptidase A24 family.

The protein is Leader peptidase HopD (hopD) of Escherichia coli.